A 232-amino-acid polypeptide reads, in one-letter code: MKAITVLSGGLDSTVVTLIAKDLGYEVTAITFNYGQRAAKREINSAKKICEILGIEHIVVDLPFVKQFGKSSLITEKEIPTLKMEELDSEKAYETMKAVWVPARNVIMFGIASGFAEALDAEKIFIGINKEEGVTFPDNTIEFVEAFNKVLEYGTLNKVKIEAPLYDKTKEEIVKLGAELEKKLGVEVLKYSYSCYHDNGEDFLHCGKCESCMRRKRAFLMAGVEDKTKYIE.

7-17 serves as a coordination point for ATP; sequence LSGGLDSTVVT. Residues C195, C206, C209, and C212 each coordinate Zn(2+).

It belongs to the QueC family. It depends on Zn(2+) as a cofactor.

The catalysed reaction is 7-carboxy-7-deazaguanine + NH4(+) + ATP = 7-cyano-7-deazaguanine + ADP + phosphate + H2O + H(+). The protein operates within purine metabolism; 7-cyano-7-deazaguanine biosynthesis. Its function is as follows. Catalyzes the ATP-dependent conversion of 7-carboxy-7-deazaguanine (CDG) to 7-cyano-7-deazaguanine (preQ(0)). The chain is 7-cyano-7-deazaguanine synthase from Methanocaldococcus jannaschii (strain ATCC 43067 / DSM 2661 / JAL-1 / JCM 10045 / NBRC 100440) (Methanococcus jannaschii).